A 201-amino-acid polypeptide reads, in one-letter code: Large ribosomal subunit protein uL4 (201 aa).

Residues 42 to 67 (GNSAQKTRSEVSGGGKKPWNQKGTGR) form a disordered region.

It belongs to the universal ribosomal protein uL4 family. As to quaternary structure, part of the 50S ribosomal subunit.

One of the primary rRNA binding proteins, this protein initially binds near the 5'-end of the 23S rRNA. It is important during the early stages of 50S assembly. It makes multiple contacts with different domains of the 23S rRNA in the assembled 50S subunit and ribosome. Its function is as follows. Forms part of the polypeptide exit tunnel. In Legionella pneumophila (strain Paris), this protein is Large ribosomal subunit protein uL4.